Consider the following 153-residue polypeptide: SsrA-binding protein (153 aa).

The protein belongs to the SmpB family.

It is found in the cytoplasm. Required for rescue of stalled ribosomes mediated by trans-translation. Binds to transfer-messenger RNA (tmRNA), required for stable association of tmRNA with ribosomes. tmRNA and SmpB together mimic tRNA shape, replacing the anticodon stem-loop with SmpB. tmRNA is encoded by the ssrA gene; the 2 termini fold to resemble tRNA(Ala) and it encodes a 'tag peptide', a short internal open reading frame. During trans-translation Ala-aminoacylated tmRNA acts like a tRNA, entering the A-site of stalled ribosomes, displacing the stalled mRNA. The ribosome then switches to translate the ORF on the tmRNA; the nascent peptide is terminated with the 'tag peptide' encoded by the tmRNA and targeted for degradation. The ribosome is freed to recommence translation, which seems to be the essential function of trans-translation. The sequence is that of SsrA-binding protein from Macrococcus caseolyticus (strain JCSC5402) (Macrococcoides caseolyticum).